The sequence spans 275 residues: Nitrogenase iron protein 1 (275 aa).

An ATP-binding site is contributed by 9 to 16 (GKGGIGKS). C97 contributes to the [4Fe-4S] cluster binding site. R100 carries the post-translational modification ADP-ribosylarginine; by dinitrogenase reductase ADP-ribosyltransferase. C132 contacts [4Fe-4S] cluster.

The protein belongs to the NifH/BchL/ChlL family. In terms of assembly, homodimer. The cofactor is [4Fe-4S] cluster. In terms of processing, the reversible ADP-ribosylation of Arg-100 inactivates the nitrogenase reductase and regulates nitrogenase activity.

It catalyses the reaction N2 + 8 reduced [2Fe-2S]-[ferredoxin] + 16 ATP + 16 H2O = H2 + 8 oxidized [2Fe-2S]-[ferredoxin] + 2 NH4(+) + 16 ADP + 16 phosphate + 6 H(+). Functionally, the key enzymatic reactions in nitrogen fixation are catalyzed by the nitrogenase complex, which has 2 components: the iron protein and the molybdenum-iron protein. This chain is Nitrogenase iron protein 1 (nifH1), found in Methanosarcina barkeri.